Here is a 237-residue protein sequence, read N- to C-terminus: Putative N-acetylmannosamine-6-phosphate 2-epimerase (237 aa).

The protein belongs to the NanE family.

The enzyme catalyses an N-acyl-D-glucosamine 6-phosphate = an N-acyl-D-mannosamine 6-phosphate. It functions in the pathway amino-sugar metabolism; N-acetylneuraminate degradation; D-fructose 6-phosphate from N-acetylneuraminate: step 3/5. Its function is as follows. Converts N-acetylmannosamine-6-phosphate (ManNAc-6-P) to N-acetylglucosamine-6-phosphate (GlcNAc-6-P). The polypeptide is Putative N-acetylmannosamine-6-phosphate 2-epimerase (Listeria monocytogenes serotype 4a (strain HCC23)).